Here is a 793-residue protein sequence, read N- to C-terminus: DnaJ homolog subfamily C member 10 (793 aa).

The N-terminal stretch at 1–32 (MGVWLNRDEFIRDVKRISLCLLVLYVVIVVGT) is a signal peptide. Residues 35–100 (NFYSLLGVSK…DLRKKYDKYG (66 aa)) form the J domain. In terms of domain architecture, Thioredoxin 1 spans 130–232 (EIITLERREF…ESLVSFAMQH (103 aa)). An intrachain disulfide couples Cys-158 to Cys-161. Trxb regions lie at residues 235 to 350 (TTVT…LPDF) and 348 to 463 (PDFE…PQNF). Thioredoxin domains are found at residues 454 to 553 (HVTT…IEDL), 557 to 665 (SVVS…SWGL), and 671 to 776 (ASID…ALIY). A disulfide bridge connects residues Cys-480 and Cys-483. Asn-530 carries an N-linked (GlcNAc...) asparagine glycan. Intrachain disulfides connect Cys-588–Cys-591 and Cys-700–Cys-703. The Prevents secretion from ER motif lies at 790–793 (KDEL).

As to quaternary structure, interacts with HSPA5 (via its J domain). Interacts with EDEM1.

It localises to the endoplasmic reticulum lumen. Endoplasmic reticulum disulfide reductase involved both in the correct folding of proteins and degradation of misfolded proteins. Required for efficient folding of proteins in the endoplasmic reticulum by catalyzing the removal of non-native disulfide bonds formed during the folding of proteins, such as LDLR. Also involved in endoplasmic reticulum-associated degradation (ERAD) by reducing incorrect disulfide bonds in misfolded glycoproteins recognized by EDEM1. Interaction with HSPA5 is required its activity, not for the disulfide reductase activity, but to facilitate the release of DNAJC10 from its substrate. Promotes apoptotic signaling pathway in response to endoplasmic reticulum stress. This is DnaJ homolog subfamily C member 10 (Dnajc10) from Rattus norvegicus (Rat).